Consider the following 509-residue polypeptide: DNA nucleotidylexotransferase (509 aa).

The interval Met1 to Ala24 is disordered. The Nuclear localization signal signature appears at Pro11–Arg17. Residues Pro27–Gln124 enclose the BRCT domain. The residue at position 134 (Ser134) is a Phosphoserine. The interval Ser151–Ala509 is mediates interaction with DNTTIP2. The segment at Val258 to Thr262 is involved in DNA binding. A 2'-deoxyribonucleoside 5'-triphosphate is bound by residues Gly333–Lys338 and His342–Asp345. 3 residues coordinate Mg(2+): Asp343, Asp345, and Asp433. A 2'-deoxyribonucleoside 5'-triphosphate is bound at residue Gly448 to Trp449.

Belongs to the DNA polymerase type-X family. As to quaternary structure, interacts with PRP19 and DNTTIP1. Forms a ternary complex with DNTTIP2 and core histone. Released from this complex by PCNA. Interacts with TRERF1. Mg(2+) is required as a cofactor.

The protein resides in the nucleus. The catalysed reaction is DNA(n) + a 2'-deoxyribonucleoside 5'-triphosphate = DNA(n+1) + diphosphate. Functionally, template-independent DNA polymerase which catalyzes the random addition of deoxynucleoside 5'-triphosphate to the 3'-end of a DNA initiator. One of the in vivo functions of this enzyme is the addition of nucleotides at the junction (N region) of rearranged Ig heavy chain and T-cell receptor gene segments during the maturation of B- and T-cells. This is DNA nucleotidylexotransferase (DNTT) from Homo sapiens (Human).